The sequence spans 685 residues: Putative protein FAR1-RELATED SEQUENCE 10 (685 aa).

The FAR1 domain occupies 69 to 161 (EYYSTFARKS…SNVHNHELLE (93 aa)). Positions 292–388 (VVVFDTSYRS…FMSHIVSKLA (97 aa)) constitute an MULE domain. An SWIM-type zinc finger spans residues 565–603 (GECCVIWNPENEEIQCSCKEFEHSGILCRHTLRVLTVKN).

This sequence belongs to the FHY3/FAR1 family.

The sequence is that of Putative protein FAR1-RELATED SEQUENCE 10 (FRS10) from Arabidopsis thaliana (Mouse-ear cress).